The chain runs to 42 residues: Photosystem II reaction center protein J (42 aa).

The helical transmembrane segment at 10 to 30 (IPLWLIATVAGILVLTVVGIF) threads the bilayer.

Belongs to the PsbJ family. As to quaternary structure, PSII is composed of 1 copy each of membrane proteins PsbA, PsbB, PsbC, PsbD, PsbE, PsbF, PsbH, PsbI, PsbJ, PsbK, PsbL, PsbM, PsbT, PsbX, PsbY, PsbZ, Psb30/Ycf12, at least 3 peripheral proteins of the oxygen-evolving complex and a large number of cofactors. It forms dimeric complexes.

The protein localises to the plastid. It localises to the chloroplast thylakoid membrane. Functionally, one of the components of the core complex of photosystem II (PSII). PSII is a light-driven water:plastoquinone oxidoreductase that uses light energy to abstract electrons from H(2)O, generating O(2) and a proton gradient subsequently used for ATP formation. It consists of a core antenna complex that captures photons, and an electron transfer chain that converts photonic excitation into a charge separation. This chain is Photosystem II reaction center protein J, found in Chara vulgaris (Common stonewort).